The following is a 326-amino-acid chain: tRNA-modifying protein YgfZ (326 aa).

The folate site is built by W27 and W189.

It belongs to the tRNA-modifying YgfZ family.

The protein resides in the cytoplasm. Functionally, folate-binding protein involved in regulating the level of ATP-DnaA and in the modification of some tRNAs. It is probably a key factor in regulatory networks that act via tRNA modification, such as initiation of chromosomal replication. This is tRNA-modifying protein YgfZ from Escherichia fergusonii (strain ATCC 35469 / DSM 13698 / CCUG 18766 / IAM 14443 / JCM 21226 / LMG 7866 / NBRC 102419 / NCTC 12128 / CDC 0568-73).